A 68-amino-acid chain; its full sequence is Alpha-conotoxin PIVA (68 aa).

The first 16 residues, 1-16 (MFTVFLLVVLATTVVS), serve as a signal peptide directing secretion. The propeptide occupies 17-41 (FTSDRASDDRNTNDKASRLLSHVVR). 3 cysteine pairs are disulfide-bonded: cysteine 43-cysteine 57, cysteine 44-cysteine 52, and cysteine 55-cysteine 64. Proline 48 and proline 54 each carry 4-hydroxyproline; partial. 4-hydroxyproline is present on proline 61. Glutamine amide is present on glutamine 66.

The protein belongs to the conotoxin A superfamily. In terms of tissue distribution, expressed by the venom duct.

The protein localises to the secreted. In terms of biological role, alpha-conotoxins act on postsynaptic membranes, they bind to the nicotinic acetylcholine receptors (nAChR) and thus inhibit them. This toxin has higher affinity for the adult subtype (alpha-1-beta-1-gamma-delta (CHRNA1-CHRNB1-CHRNG-CHRND) subunits) (IC(50)=2.3 nM) of the receptor than for the fetal subtype (alpha-1-beta-1-epsilon-delta (CHRNA1-CHRNB1-CHRND-CHRNE) subunits) (IC(50)=22 nM). In Conus purpurascens (Purple cone), this protein is Alpha-conotoxin PIVA.